Here is a 199-residue protein sequence, read N- to C-terminus: MTKVLVLYYSAYGHIEAMANAVAEGAREAGATVDIKRVPELVPDDVAKASYYKLDQAAPIAKIEELADYDAIIVGTGTRFGRMASQMANFLDQAGGLWAKGALNGKVGGAFTSTATQHGGQETTLFTIITNLLHFGMTIVGLNYGFAGQMKLDEVTGGSPYGATTITGGDGSRQPSENELAGARYQGRVIAETAKKLHG.

Residues 4–190 (VLVLYYSAYG…AGARYQGRVI (187 aa)) enclose the Flavodoxin-like domain. FMN contacts are provided by residues 10–15 (SAYGHI) and 78–80 (TRF). Residue tyrosine 12 coordinates NAD(+). Tryptophan 98 is a substrate binding site. FMN-binding positions include 113-119 (STATQHG) and histidine 134.

It belongs to the WrbA family. Requires FMN as cofactor.

It carries out the reaction a quinone + NADH + H(+) = a quinol + NAD(+). It catalyses the reaction a quinone + NADPH + H(+) = a quinol + NADP(+). In Bradyrhizobium sp. (strain ORS 278), this protein is NAD(P)H dehydrogenase (quinone).